A 146-amino-acid polypeptide reads, in one-letter code: Large ribosomal subunit protein uL11 (146 aa).

This sequence belongs to the universal ribosomal protein uL11 family. In terms of assembly, part of the ribosomal stalk of the 50S ribosomal subunit. Interacts with L10 and the large rRNA to form the base of the stalk. L10 forms an elongated spine to which L12 dimers bind in a sequential fashion forming a multimeric L10(L12)X complex. Post-translationally, one or more lysine residues are methylated.

Forms part of the ribosomal stalk which helps the ribosome interact with GTP-bound translation factors. The polypeptide is Large ribosomal subunit protein uL11 (Corynebacterium kroppenstedtii (strain DSM 44385 / JCM 11950 / CIP 105744 / CCUG 35717)).